The sequence spans 581 residues: Protein FAM83D (581 aa).

Positions 1 to 297 are DUF1669; that stretch reads MALRYDGLDE…LYAQSKPISS (297 aa). Residues 75–101 are disordered; the sequence is PGEEGAAAGAEDSFGSSHDCSSGTYFP. Residues 88 to 98 show a composition bias toward polar residues; it reads FGSSHDCSSGT. The residue at position 296 (Ser-296) is a Phosphoserine. Residues 338–581 are required for interaction with KIF22 and function in chromosome congression; the sequence is TPRKVELGGE…REIMLYPSYQ (244 aa). Disordered regions lie at residues 366-401 and 426-503; these read EDYF…MSDV and QTVV…GPPK. The span at 369–382 shows a compositional bias: basic and acidic residues; the sequence is FSSRKDRLEGRRVT. Residues 426–438 are compositionally biased toward low complexity; that stretch reads QTVVPTTSATTQT. Residue Ser-456 is modified to Phosphoserine. Residues 462–488 show a composition bias toward low complexity; it reads SVSRSSSLRSSSSLSSQGSVASSIGSQ. A Phosphothreonine modification is found at Thr-507.

The protein belongs to the FAM83 family. Interacts with FBXW7; promotes FBXW7 degradation. May interact with RAF1. Interacts with KIF22; recruits KIF22 to mitotic spindle microtubules. Interacts (via C-terminus) with DYNLL1. Interacts with HMMR. Directly interacts (via DUF1669) with CSNK1A1 and CSNK1A1L. Post-translationally, phosphorylated during mitosis.

The protein resides in the cytoplasm. It is found in the cytoskeleton. It localises to the spindle. Its subcellular location is the spindle pole. Through the degradation of FBXW7, may act indirectly on the expression and downstream signaling of MTOR, JUN and MYC. May play also a role in cell proliferation through activation of the ERK1/ERK2 signaling cascade. May also be important for proper chromosome congression and alignment during mitosis through its interaction with KIF22. The chain is Protein FAM83D from Bos taurus (Bovine).